The sequence spans 130 residues: Small ribosomal subunit protein uS11c (130 aa).

The protein belongs to the universal ribosomal protein uS11 family. Part of the 30S ribosomal subunit.

It is found in the plastid. The protein localises to the chloroplast. This chain is Small ribosomal subunit protein uS11c, found in Zygnema circumcarinatum (Green alga).